A 407-amino-acid polypeptide reads, in one-letter code: E3 ubiquitin-protein ligase TRIM13 (407 aa).

The RING-type zinc-finger motif lies at 10–58; sequence CPICCSLFDDPRVLPCSHNFCKKCLEGILEGNVRNSLWRSSPFKCPTCR. The B box-type zinc finger occupies 89–131; the sequence is PKMPVCKGHLGQPLNIFCLTDMQLICGICATRGEHTKHVFCSI. Zn(2+) is bound by residues cysteine 94, histidine 97, cysteine 117, and histidine 123. Residues 172 to 200 are a coiled coil; the sequence is LQLLTKDSDKVKEFFEKLQYTLDQKKNEI. A helical transmembrane segment spans residues 316–336; sequence PLFVVVILLGLLIFFSPTMFL.

Interacts (via C-terminal domain) with VCP. Interacts with AKT1; the interaction ubiquitinates AKT1 and leads to its proteasomal degradation. Interacts with MDM2; the interaction ubiquitinates AKT1 and leads to its proteasomal degradation. Interacts with p62/SQSTM1. Interacts with TRAF6. Interacts with IKBKG/NEMO. Auto-ubiquitinated; requires the RING-type zinc finger. Auto-polyubiquitination leads to proteasomal degradation.

It localises to the endoplasmic reticulum membrane. The enzyme catalyses S-ubiquitinyl-[E2 ubiquitin-conjugating enzyme]-L-cysteine + [acceptor protein]-L-lysine = [E2 ubiquitin-conjugating enzyme]-L-cysteine + N(6)-ubiquitinyl-[acceptor protein]-L-lysine.. The protein operates within protein modification; protein ubiquitination. Endoplasmic reticulum (ER) membrane anchored E3 ligase involved in the retrotranslocation and turnover of membrane and secretory proteins from the ER through a set of processes named ER-associated degradation (ERAD). This process acts on misfolded proteins as well as in the regulated degradation of correctly folded proteins. Enhances ionizing radiation-induced p53/TP53 stability and apoptosis via ubiquitinating MDM2 and AKT1 and decreasing AKT1 kinase activity through MDM2 and AKT1 proteasomal degradation. Regulates ER stress-induced autophagy, and may act as a tumor suppressor. Also plays a role in innate immune response by stimulating NF-kappa-B activity in the TLR2 signaling pathway. Ubiquitinates TRAF6 via the 'Lys-29'-linked polyubiquitination chain resulting in NF-kappa-B activation. Participates as well in T-cell receptor-mediated NF-kappa-B activation. In the presence of TNF, modulates the IKK complex by regulating IKBKG/NEMO ubiquitination leading to the repression of NF-kappa-B. This is E3 ubiquitin-protein ligase TRIM13 (TRIM13) from Bos taurus (Bovine).